A 132-amino-acid chain; its full sequence is Small ribosomal subunit protein uS8 (132 aa).

Belongs to the universal ribosomal protein uS8 family. As to quaternary structure, part of the 30S ribosomal subunit. Contacts proteins S5 and S12.

Functionally, one of the primary rRNA binding proteins, it binds directly to 16S rRNA central domain where it helps coordinate assembly of the platform of the 30S subunit. This is Small ribosomal subunit protein uS8 from Geobacter metallireducens (strain ATCC 53774 / DSM 7210 / GS-15).